The following is a 405-amino-acid chain: DNA polymerase IV 1 (405 aa).

In terms of domain architecture, UmuC spans 23 to 203 (IAHIDCDAFY…RPVTTIWGVG (181 aa)). Aspartate 27 and aspartate 120 together coordinate Mg(2+). Glutamate 121 is an active-site residue.

This sequence belongs to the DNA polymerase type-Y family. Monomer. Requires Mg(2+) as cofactor.

It is found in the cytoplasm. It carries out the reaction DNA(n) + a 2'-deoxyribonucleoside 5'-triphosphate = DNA(n+1) + diphosphate. Functionally, poorly processive, error-prone DNA polymerase involved in untargeted mutagenesis. Copies undamaged DNA at stalled replication forks, which arise in vivo from mismatched or misaligned primer ends. These misaligned primers can be extended by PolIV. Exhibits no 3'-5' exonuclease (proofreading) activity. May be involved in translesional synthesis, in conjunction with the beta clamp from PolIII. This chain is DNA polymerase IV 1 (dinB1), found in Agrobacterium fabrum (strain C58 / ATCC 33970) (Agrobacterium tumefaciens (strain C58)).